Here is a 406-residue protein sequence, read N- to C-terminus: Tryptophan synthase beta chain (406 aa).

Lys-99 carries the N6-(pyridoxal phosphate)lysine modification.

This sequence belongs to the TrpB family. As to quaternary structure, tetramer of two alpha and two beta chains. It depends on pyridoxal 5'-phosphate as a cofactor.

It catalyses the reaction (1S,2R)-1-C-(indol-3-yl)glycerol 3-phosphate + L-serine = D-glyceraldehyde 3-phosphate + L-tryptophan + H2O. It functions in the pathway amino-acid biosynthesis; L-tryptophan biosynthesis; L-tryptophan from chorismate: step 5/5. Its function is as follows. The beta subunit is responsible for the synthesis of L-tryptophan from indole and L-serine. In Chelativorans sp. (strain BNC1), this protein is Tryptophan synthase beta chain.